The chain runs to 492 residues: Probable cytosol aminopeptidase (492 aa).

2 residues coordinate Mn(2+): Lys-259 and Asp-264. Residue Lys-271 is part of the active site. 3 residues coordinate Mn(2+): Asp-283, Asp-342, and Glu-344. Residue Arg-346 is part of the active site.

Belongs to the peptidase M17 family. Mn(2+) serves as cofactor.

It localises to the cytoplasm. It carries out the reaction Release of an N-terminal amino acid, Xaa-|-Yaa-, in which Xaa is preferably Leu, but may be other amino acids including Pro although not Arg or Lys, and Yaa may be Pro. Amino acid amides and methyl esters are also readily hydrolyzed, but rates on arylamides are exceedingly low.. The enzyme catalyses Release of an N-terminal amino acid, preferentially leucine, but not glutamic or aspartic acids.. Functionally, presumably involved in the processing and regular turnover of intracellular proteins. Catalyzes the removal of unsubstituted N-terminal amino acids from various peptides. This Synechocystis sp. (strain ATCC 27184 / PCC 6803 / Kazusa) protein is Probable cytosol aminopeptidase (pepA).